Consider the following 30-residue polypeptide: ALWKNMLKGIGKLAGKAALGAVKKLVGAES.

The protein belongs to the frog skin active peptide (FSAP) family. Dermaseptin subfamily. Monomer and oligomer. Forms aggregates in aqueous environments. In terms of tissue distribution, expressed by the skin glands.

It is found in the secreted. Its function is as follows. Potent antimicrobial peptide with activity against bacteria and protozoa. Also has activity against fungi. Probably acts by disturbing membrane functions with its amphipathic structure. Binds to healthy erythrocytes (this binding is receptor independent), but has very weak hemolytic activity. Does not bind to P.falciparum infected erythrocytes, but accumulates within the parasite. Kills the parasite, but has no hemolytic activity on the host cell. The sequence is that of Dermaseptin-S3 from Phyllomedusa sauvagei (Sauvage's leaf frog).